We begin with the raw amino-acid sequence, 289 residues long: Probable vesicular-fusion protein sec17 homolog (289 aa).

The residue at position 76 (Ser-76) is a Phosphoserine.

This sequence belongs to the SNAP family.

Its subcellular location is the membrane. In terms of biological role, required for vesicular transport between the endoplasmic reticulum and the Golgi apparatus. This Schizosaccharomyces pombe (strain 972 / ATCC 24843) (Fission yeast) protein is Probable vesicular-fusion protein sec17 homolog (sec17).